The primary structure comprises 282 residues: Armadillo repeat-containing protein 1 (282 aa).

Met1 carries the post-translational modification N-acetylmethionine. Residues 39 to 81 (GCLPGLILFMDHPNPPVVHSALLALRYLAECRANREKMKGELG) form an ARM repeat. Residue Thr137 is modified to Phosphothreonine. Phosphoserine occurs at positions 189, 246, 260, and 267. The segment at 239-261 (DYLPEDESPTKEQDKAVSRVGSH) is disordered. The segment covering 246 to 255 (SPTKEQDKAV) has biased composition (basic and acidic residues).

In terms of assembly, interacts with mitochondrial contact site and cristae organizing system (MICOS) complex components IMMT/MIC60 and MICOS10/MIC10. Interacts with mitochondrial outer membrane sorting assembly machinery (SAM) complex components SAMM50 and MTX1.

Its subcellular location is the cytoplasm. It localises to the mitochondrion. The protein localises to the mitochondrion outer membrane. In association with mitochondrial contact site and cristae organizing system (MICOS) complex components and mitochondrial outer membrane sorting assembly machinery (SAM) complex components may regulate mitochondrial dynamics playing a role in determining mitochondrial length, distribution and motility. The sequence is that of Armadillo repeat-containing protein 1 (Armc1) from Mus musculus (Mouse).